The sequence spans 217 residues: Pyridoxine/pyridoxamine 5'-phosphate oxidase (217 aa).

FMN is bound by residues 66–71 (RMVLLK), 81–82 (FT), R87, K88, and Q110. Residue K71 participates in substrate binding. Residues Y128, R132, and S136 each contribute to the substrate site. Residues 145–146 (QS) and W190 each bind FMN. 196 to 198 (RLH) serves as a coordination point for substrate. R200 is an FMN binding site.

It belongs to the pyridoxamine 5'-phosphate oxidase family. As to quaternary structure, homodimer. Requires FMN as cofactor.

It carries out the reaction pyridoxamine 5'-phosphate + O2 + H2O = pyridoxal 5'-phosphate + H2O2 + NH4(+). The catalysed reaction is pyridoxine 5'-phosphate + O2 = pyridoxal 5'-phosphate + H2O2. It participates in cofactor metabolism; pyridoxal 5'-phosphate salvage; pyridoxal 5'-phosphate from pyridoxamine 5'-phosphate: step 1/1. Its pathway is cofactor metabolism; pyridoxal 5'-phosphate salvage; pyridoxal 5'-phosphate from pyridoxine 5'-phosphate: step 1/1. Catalyzes the oxidation of either pyridoxine 5'-phosphate (PNP) or pyridoxamine 5'-phosphate (PMP) into pyridoxal 5'-phosphate (PLP). The chain is Pyridoxine/pyridoxamine 5'-phosphate oxidase from Psychromonas ingrahamii (strain DSM 17664 / CCUG 51855 / 37).